We begin with the raw amino-acid sequence, 352 residues long: tRNA (guanine-N(1)-)-methyltransferase (352 aa).

S-adenosyl-L-methionine is bound by residues G109 and 129-134 (IGDYVL).

This sequence belongs to the RNA methyltransferase TrmD family. Homodimer.

Its subcellular location is the cytoplasm. The catalysed reaction is guanosine(37) in tRNA + S-adenosyl-L-methionine = N(1)-methylguanosine(37) in tRNA + S-adenosyl-L-homocysteine + H(+). In terms of biological role, specifically methylates guanosine-37 in various tRNAs. The chain is tRNA (guanine-N(1)-)-methyltransferase from Chlamydia trachomatis serovar A (strain ATCC VR-571B / DSM 19440 / HAR-13).